A 390-amino-acid chain; its full sequence is Queuine tRNA-ribosyltransferase (390 aa).

The Proton acceptor role is filled by Asp92. Residues 92 to 96 (DSGGF), Asp146, Gln195, and Gly222 each bind substrate. Residues 253 to 259 (GVGTPED) are RNA binding. Asp272 functions as the Nucleophile in the catalytic mechanism. The segment at 277–281 (TRNAR) is RNA binding; important for wobble base 34 recognition. Cys310, Cys312, Cys315, and His354 together coordinate Zn(2+).

It belongs to the queuine tRNA-ribosyltransferase family. In terms of assembly, homodimer. Within each dimer, one monomer is responsible for RNA recognition and catalysis, while the other monomer binds to the replacement base PreQ1. Zn(2+) is required as a cofactor.

It carries out the reaction 7-aminomethyl-7-carbaguanine + guanosine(34) in tRNA = 7-aminomethyl-7-carbaguanosine(34) in tRNA + guanine. It participates in tRNA modification; tRNA-queuosine biosynthesis. Functionally, catalyzes the base-exchange of a guanine (G) residue with the queuine precursor 7-aminomethyl-7-deazaguanine (PreQ1) at position 34 (anticodon wobble position) in tRNAs with GU(N) anticodons (tRNA-Asp, -Asn, -His and -Tyr). Catalysis occurs through a double-displacement mechanism. The nucleophile active site attacks the C1' of nucleotide 34 to detach the guanine base from the RNA, forming a covalent enzyme-RNA intermediate. The proton acceptor active site deprotonates the incoming PreQ1, allowing a nucleophilic attack on the C1' of the ribose to form the product. After dissociation, two additional enzymatic reactions on the tRNA convert PreQ1 to queuine (Q), resulting in the hypermodified nucleoside queuosine (7-(((4,5-cis-dihydroxy-2-cyclopenten-1-yl)amino)methyl)-7-deazaguanosine). The chain is Queuine tRNA-ribosyltransferase from Verminephrobacter eiseniae (strain EF01-2).